The primary structure comprises 350 residues: Biotin synthase (350 aa).

Residues 38–257 (NKVQVSTLLS…AVARIIMPMS (220 aa)) form the Radical SAM core domain. [4Fe-4S] cluster is bound by residues Cys53, Cys57, and Cys60. Residues Cys97, Cys128, Cys188, and Arg260 each coordinate [2Fe-2S] cluster.

The protein belongs to the radical SAM superfamily. Biotin synthase family. As to quaternary structure, homodimer. The cofactor is [4Fe-4S] cluster. It depends on [2Fe-2S] cluster as a cofactor.

It catalyses the reaction (4R,5S)-dethiobiotin + (sulfur carrier)-SH + 2 reduced [2Fe-2S]-[ferredoxin] + 2 S-adenosyl-L-methionine = (sulfur carrier)-H + biotin + 2 5'-deoxyadenosine + 2 L-methionine + 2 oxidized [2Fe-2S]-[ferredoxin]. It participates in cofactor biosynthesis; biotin biosynthesis; biotin from 7,8-diaminononanoate: step 2/2. In terms of biological role, catalyzes the conversion of dethiobiotin (DTB) to biotin by the insertion of a sulfur atom into dethiobiotin via a radical-based mechanism. The sequence is that of Biotin synthase from Photobacterium profundum (strain SS9).